A 114-amino-acid polypeptide reads, in one-letter code: Ribonuclease P protein component (114 aa).

Belongs to the RnpA family. As to quaternary structure, consists of a catalytic RNA component (M1 or rnpB) and a protein subunit.

It catalyses the reaction Endonucleolytic cleavage of RNA, removing 5'-extranucleotides from tRNA precursor.. Functionally, RNaseP catalyzes the removal of the 5'-leader sequence from pre-tRNA to produce the mature 5'-terminus. It can also cleave other RNA substrates such as 4.5S RNA. The protein component plays an auxiliary but essential role in vivo by binding to the 5'-leader sequence and broadening the substrate specificity of the ribozyme. This Borrelia hermsii (strain HS1 / DAH) protein is Ribonuclease P protein component.